The primary structure comprises 254 residues: Transmembrane protein 70, mitochondrial (254 aa).

The N-terminal 78 residues, 1-78 (MLFLALGGPW…PVCWERGVRC (78 aa)), are a transit peptide targeting the mitochondrion. Over 79–112 (SHTQLDKSEDGRLIYTGNLARTVFGVKCFSYSTS) the chain is Mitochondrial matrix. The helical transmembrane segment at 113–133 (LISLAFLPYIFAQNNVIFGSL) threads the bilayer. At 134-136 (PLQ) the chain is on the mitochondrial intermembrane side. A helical membrane pass occupies residues 137-157 (ILFYGTIGSFTVITPALLHFL). Residues 158 to 254 (TKGYVIRLYH…SEKKQLKEEK (97 aa)) are Mitochondrial matrix-facing.

This sequence belongs to the TMEM70 family. Homooligomer. Interacts (homooligomer form) with ATP5MC1; this interaction facilitates the oligomer formation of subunit c/ATP5MC1 (c-ring) and the c-ring membrane insertion and also protects ATP5MC1 against intramitochondrial proteolysis. Interacts with the core subunits TMEM126B, NDUFAF1, ECSIT and ACAD9 of the MCIA complex. Interacts with ATP5MC3, TMEM242 and TIMMDC1.

The protein resides in the mitochondrion inner membrane. Its function is as follows. Scaffold protein that participates in the c-ring assembly of mitochondrial ATP synthase (F(1)F(0) ATP synthase or complex V) by facilitating the membrane insertion and oligomer formation of the subunit c/ATP5MC1 through its interaction. Therefore, participates in the early stage of mitochondrial ATP synthase biogenesis and also protects subunit c/ATP5MC1 against intramitochondrial proteolysis. In addition, binds the mitochondrial proton-transporting ATP synthase complexes I and may play a role in the stability of its membrane-bound subassemblies. This is Transmembrane protein 70, mitochondrial from Bos taurus (Bovine).